Consider the following 405-residue polypeptide: uncharacterized protein (405 aa).

Disordered regions lie at residues 1–21 (MSKK…ESKT), 150–179 (IKDE…QEGP), and 285–405 (DDED…KSRS). Residues 7 to 16 (KNASPKNNSD) are compositionally biased toward polar residues. 2 stretches are compositionally biased toward acidic residues: residues 312-331 (SDDE…DDEE) and 349-358 (DDEDDEEEGE). Composition is skewed to basic residues over residues 365–374 (SSKKSSKKAS) and 390–405 (PKKK…KSRS).

This is an uncharacterized protein from Acanthamoeba polyphaga (Amoeba).